The primary structure comprises 449 residues: Tubulin alpha-1C chain (449 aa).

Positions 1–4 (MREC) match the MREC motif motif. Gln-11 serves as a coordination point for GTP. N6-acetyllysine is present on Lys-40. Positions 71, 140, 144, 145, 179, 206, and 228 each coordinate GTP. Glu-71 serves as a coordination point for Mg(2+). Glu-254 is a catalytic residue. 3'-nitrotyrosine is present on Tyr-282. Tyr-432 bears the Phosphotyrosine mark. Ser-439 carries the post-translational modification Phosphoserine. At Tyr-449 the chain carries 3'-nitrotyrosine.

This sequence belongs to the tubulin family. As to quaternary structure, dimer of alpha and beta chains. A typical microtubule is a hollow water-filled tube with an outer diameter of 25 nm and an inner diameter of 15 nM. Alpha-beta heterodimers associate head-to-tail to form protofilaments running lengthwise along the microtubule wall with the beta-tubulin subunit facing the microtubule plus end conferring a structural polarity. Microtubules usually have 13 protofilaments but different protofilament numbers can be found in some organisms and specialized cells. It depends on Mg(2+) as a cofactor. Some glutamate residues at the C-terminus are polyglycylated, resulting in polyglycine chains on the gamma-carboxyl group. Glycylation is mainly limited to tubulin incorporated into axonemes (cilia and flagella) whereas glutamylation is prevalent in neuronal cells, centrioles, axonemes, and the mitotic spindle. Both modifications can coexist on the same protein on adjacent residues, and lowering polyglycylation levels increases polyglutamylation, and reciprocally. Cilia and flagella glycylation is required for their stability and maintenance. Flagella glycylation controls sperm motility. Post-translationally, some glutamate residues at the C-terminus are polyglutamylated, resulting in polyglutamate chains on the gamma-carboxyl group. Polyglutamylation plays a key role in microtubule severing by spastin (SPAST). SPAST preferentially recognizes and acts on microtubules decorated with short polyglutamate tails: severing activity by SPAST increases as the number of glutamates per tubulin rises from one to eight, but decreases beyond this glutamylation threshold. Glutamylation is also involved in cilia motility. In terms of processing, acetylation of alpha chains at Lys-40 is located inside the microtubule lumen. This modification has been correlated with increased microtubule stability, intracellular transport and ciliary assembly. Methylation of alpha chains at Lys-40 is found in mitotic microtubules and is required for normal mitosis and cytokinesis contributing to genomic stability. Post-translationally, nitration of Tyr-449 is irreversible and interferes with normal dynein intracellular distribution. In terms of processing, undergoes a tyrosination/detyrosination cycle, the cyclic removal and re-addition of a C-terminal tyrosine residue by the enzymes tubulin tyrosine carboxypeptidase (MATCAP1, VASH1 or VASH2) and tubulin tyrosine ligase (TTL), respectively. Tyrosination promotes microtubule interaction with CAP-Gly domain-containing proteins such as CLIP1, CLIP2 and DCTN1. Tyrosination regulates the initiation of dynein-dynactin motility via interaction with DCTN1, which brings the dynein-dynactin complex into contact with microtubules. In neurons, tyrosinated tubulins mediate the initiation of retrograde vesicle transport. Post-translationally, detyrosination is involved in metaphase plate congression by guiding chromosomes during mitosis: detyrosination promotes interaction with CENPE, promoting pole-proximal transport of chromosomes toward the equator. Detyrosination increases microtubules-dependent mechanotransduction in dystrophic cardiac and skeletal muscle. In cardiomyocytes, detyrosinated microtubules are required to resist to contractile compression during contraction: detyrosination promotes association with desmin (DES) at force-generating sarcomeres, leading to buckled microtubules and mechanical resistance to contraction.

It is found in the cytoplasm. The protein localises to the cytoskeleton. It catalyses the reaction GTP + H2O = GDP + phosphate + H(+). In terms of biological role, tubulin is the major constituent of microtubules, a cylinder consisting of laterally associated linear protofilaments composed of alpha- and beta-tubulin heterodimers. Microtubules grow by the addition of GTP-tubulin dimers to the microtubule end, where a stabilizing cap forms. Below the cap, tubulin dimers are in GDP-bound state, owing to GTPase activity of alpha-tubulin. This chain is Tubulin alpha-1C chain (Tuba1c), found in Rattus norvegicus (Rat).